We begin with the raw amino-acid sequence, 944 residues long: Valine--tRNA ligase (944 aa).

Positions 43 to 53 (PNVTGTLHMGH) match the 'HIGH' region motif. A 'KMSKS' region motif is present at residues 550 to 554 (KMSKS). Lys-553 provides a ligand contact to ATP. Residues 878–942 (LVDMDAERTR…QLTGLREQRA (65 aa)) are a coiled coil.

This sequence belongs to the class-I aminoacyl-tRNA synthetase family. ValS type 1 subfamily. In terms of assembly, monomer.

Its subcellular location is the cytoplasm. The enzyme catalyses tRNA(Val) + L-valine + ATP = L-valyl-tRNA(Val) + AMP + diphosphate. Catalyzes the attachment of valine to tRNA(Val). As ValRS can inadvertently accommodate and process structurally similar amino acids such as threonine, to avoid such errors, it has a 'posttransfer' editing activity that hydrolyzes mischarged Thr-tRNA(Val) in a tRNA-dependent manner. This Xanthomonas axonopodis pv. citri (strain 306) protein is Valine--tRNA ligase.